Here is a 119-residue protein sequence, read N- to C-terminus: Protein TusC (119 aa).

This sequence belongs to the DsrF/TusC family. In terms of assembly, heterohexamer, formed by a dimer of trimers. The hexameric TusBCD complex contains 2 copies each of TusB, TusC and TusD. The TusBCD complex interacts with TusE.

It is found in the cytoplasm. Part of a sulfur-relay system required for 2-thiolation of 5-methylaminomethyl-2-thiouridine (mnm(5)s(2)U) at tRNA wobble positions. In Shigella sonnei (strain Ss046), this protein is Protein TusC.